The chain runs to 473 residues: Photosystem II CP43 reaction center protein (473 aa).

A propeptide spanning residues 1–14 (MKTLYSLRRFYPVE) is cleaved from the precursor. Position 15 is an N-acetylthreonine (T15). The residue at position 15 (T15) is a Phosphothreonine. 5 helical membrane passes run 69 to 93 (LFEV…PHLA), 134 to 155 (LLGP…KDRN), 178 to 200 (KALY…RKIT), 255 to 275 (KPFA…LSYS), and 291 to 312 (WFNN…ASQA). E367 serves as a coordination point for [CaMn4O5] cluster. The helical transmembrane segment at 447–471 (RARAAAAGFEKGIDRDLEPVLSMTP) threads the bilayer.

This sequence belongs to the PsbB/PsbC family. PsbC subfamily. As to quaternary structure, PSII is composed of 1 copy each of membrane proteins PsbA, PsbB, PsbC, PsbD, PsbE, PsbF, PsbH, PsbI, PsbJ, PsbK, PsbL, PsbM, PsbT, PsbX, PsbY, PsbZ, Psb30/Ycf12, at least 3 peripheral proteins of the oxygen-evolving complex and a large number of cofactors. It forms dimeric complexes. Binds multiple chlorophylls and provides some of the ligands for the Ca-4Mn-5O cluster of the oxygen-evolving complex. It may also provide a ligand for a Cl- that is required for oxygen evolution. PSII binds additional chlorophylls, carotenoids and specific lipids. serves as cofactor.

It is found in the plastid. The protein localises to the chloroplast thylakoid membrane. One of the components of the core complex of photosystem II (PSII). It binds chlorophyll and helps catalyze the primary light-induced photochemical processes of PSII. PSII is a light-driven water:plastoquinone oxidoreductase, using light energy to abstract electrons from H(2)O, generating O(2) and a proton gradient subsequently used for ATP formation. This Dioscorea elephantipes (Elephant's foot yam) protein is Photosystem II CP43 reaction center protein.